We begin with the raw amino-acid sequence, 241 residues long: Adenosylcobinamide-GDP ribazoletransferase (241 aa).

The next 4 membrane-spanning stretches (helical) occupy residues 34–54 (LGLPAVGLVSGLLAGVVAWAF), 108–128 (VGGLAIGSMALLLAVASFGWI), 184–206 (LPFSPVATLTCAVCSAVVAWTCL), and 220–240 (FLGASIWVSRVLSAVCLSSLP).

The protein belongs to the CobS family. Requires Mg(2+) as cofactor.

It localises to the cell membrane. The catalysed reaction is alpha-ribazole + adenosylcob(III)inamide-GDP = adenosylcob(III)alamin + GMP + H(+). It carries out the reaction alpha-ribazole 5'-phosphate + adenosylcob(III)inamide-GDP = adenosylcob(III)alamin 5'-phosphate + GMP + H(+). Its pathway is cofactor biosynthesis; adenosylcobalamin biosynthesis; adenosylcobalamin from cob(II)yrinate a,c-diamide: step 7/7. Functionally, joins adenosylcobinamide-GDP and alpha-ribazole to generate adenosylcobalamin (Ado-cobalamin). Also synthesizes adenosylcobalamin 5'-phosphate from adenosylcobinamide-GDP and alpha-ribazole 5'-phosphate. In Methanopyrus kandleri (strain AV19 / DSM 6324 / JCM 9639 / NBRC 100938), this protein is Adenosylcobinamide-GDP ribazoletransferase.